Consider the following 66-residue polypeptide: Cell division protein FtsB (66 aa).

Residues 1-3 lie on the Cytoplasmic side of the membrane; that stretch reads MKM. A helical membrane pass occupies residues 4-21; that stretch reads LKIFLLFLLFWLQCSLWI. Over 22 to 66 the chain is Extracellular; that stretch reads GKNGILDYIKIYKKIIVQKKKNEDFQIRNNQLILEIERLNNAIKN. The stretch at 38–66 forms a coiled coil; sequence VQKKKNEDFQIRNNQLILEIERLNNAIKN.

Belongs to the FtsB family.

The protein resides in the cell membrane. Essential cell division protein. May link together the upstream cell division proteins, which are predominantly cytoplasmic, with the downstream cell division proteins, which are predominantly extracellular. This chain is Cell division protein FtsB, found in Buchnera aphidicola subsp. Schizaphis graminum (strain Sg).